The sequence spans 134 residues: Secretin (134 aa).

The N-terminal stretch at 1 to 21 (MATRALLLLLLLPPLLLLAGC) is a signal peptide. Residues 22–31 (AARPAPPRAP) constitute a propeptide that is removed on maturation. Position 59 is a valine amide (Val-59). Ser-63 is modified (phosphoserine). Positions 63–134 (SQQDPENNTA…PAAEGSPMPP (72 aa)) are excised as a propeptide.

This sequence belongs to the glucagon family.

It localises to the secreted. Functionally, hormone involved in different processes, such as regulation of the pH of the duodenal content, food intake and water homeostasis. Exerts its biological effects by binding to secretin receptor (SCTR), a G-protein coupled receptor expressed in the basolateral domain of several cells. Acts as a key gastrointestinal hormone by regulating the pH of the duodenal content. Secreted by S cells of the duodenum in the crypts of Lieberkuehn and regulates the pH of the duodenum by (1) inhibiting the secretion of gastric acid from the parietal cells of the stomach and (2) stimulating the production of bicarbonate (NaHCO(3)) from the ductal cells of the pancreas. Production of bicarbonate is essential to neutralize the pH and ensure no damage is done to the small intestine by the gastric acid. In addition to regulating the pH of the duodenal content, plays a central role in diet induced thermogenesis: acts as a non-sympathetic brown fat (BAT) activator mediating prandial thermogenesis, which consequentially induces satiation. Mechanistically, secretin released by the gut after a meal binds to secretin receptor (SCTR) in brown adipocytes, activating brown fat thermogenesis by stimulating lipolysis, which is sensed in the brain and promotes satiation. Also able to stimulate lipolysis in white adipocytes. Also plays an important role in cellular osmoregulation: released into the systemic circulation in response to hyperosmolality and acts at different levels in the hypothalamus, pituitary and kidney to regulate water homeostasis. Also plays a role in the central nervous system, possibly by acting as a neuropeptide hormone: required for hippocampal synaptic function and neural progenitor cells maintenance. The sequence is that of Secretin from Sus scrofa (Pig).